Here is a 441-residue protein sequence, read N- to C-terminus: Phenoloxidase-activating enzyme (441 aa).

An N-terminal signal peptide occupies residues Met-1–Ala-21. A Pyrrolidone carboxylic acid modification is found at Gln-22. Clip domains lie at Ser-23 to Cys-76 and Pro-77 to Cys-127. 8 disulfide bridges follow: Cys-24-Cys-75, Cys-34-Cys-65, Cys-40-Cys-76, Cys-78-Cys-126, Cys-88-Cys-117, Cys-94-Cys-127, Cys-164-Cys-305, and Cys-203-Cys-219. In terms of domain architecture, Peptidase S1 spans Ile-174–Glu-440. His-218 acts as the Charge relay system in catalysis. Ca(2+) is bound by residues Glu-237, Asn-239, Asn-242, and Asp-246. N-linked (GlcNAc...) asparagine glycosylation occurs at Asn-239. Asp-285 serves as the catalytic Charge relay system. A glycan (N-linked (GlcNAc...) asparagine) is linked at Asn-334. Cystine bridges form between Cys-356–Cys-377 and Cys-387–Cys-416. Ser-391 (charge relay system) is an active-site residue.

It belongs to the peptidase S1 family. CLIP subfamily. In terms of assembly, in the active form, heterodimer of a light chain and a heavy chain; disulfide-linked. In terms of processing, proteolytically cleaved for activation. Cleavage produces a light chain and a catalytic heavy chain which remains covalently associated probably through an interchain disulfide bond. Glycosylated.

Its activity is regulated as follows. Stabilized by calcium. Inhibited by di-isopropyl phosphorofluoridate (DFP), phenylmethanesulfonylfluoride (PMSF), p-nitrophenyl-p'-guanidinobenzonate (p-NPGB), p-chloromercuribenzoate (PCMB), ethylenediaminetetraacetic acid (EDTA), urea and CI-13c. In terms of biological role, endopeptidase with selective post-Arg cleavage site. Activates prophenoloxidase. Has a probable role in the melanization process as part of the innate immune response. This is Phenoloxidase-activating enzyme from Bombyx mori (Silk moth).